Here is a 548-residue protein sequence, read N- to C-terminus: 4-coumarate--CoA ligase CCL1 (548 aa).

ATP contacts are provided by residues 195–203 (SSGTTGLPK), 337–342 (QGYGMT), D426, 438–441 (IVDR), and K532. The segment at 268–337 (EISKLLELIE…EKLPHAKLGQ (70 aa)) is SBD1. The tract at residues 338-405 (GYGMTEAGPV…IRGKQIMKGY (68 aa)) is SBD2.

The protein belongs to the ATP-dependent AMP-binding enzyme family. As to expression, mostly expressed in glandular trichomes (lupulin glands) after flowering, and, to a lower extent, in stems, leaves, cones and flowers.

The protein resides in the cytoplasm. The enzyme catalyses (E)-4-coumarate + ATP + CoA = (E)-4-coumaroyl-CoA + AMP + diphosphate. It functions in the pathway secondary metabolite biosynthesis. Functionally, involved in the biosynthesis of prenylated phenolics natural products which contribute to the bitter taste of beer and display broad biological activities. Catalyzes the ligation of CoA on (E)-4-coumarate to produce (E)-4-coumaroyl-CoA. This chain is 4-coumarate--CoA ligase CCL1, found in Humulus lupulus (European hop).